The primary structure comprises 484 residues: ATP synthase subunit beta (484 aa).

169–176 (GGAGVGKT) is an ATP binding site.

This sequence belongs to the ATPase alpha/beta chains family. As to quaternary structure, F-type ATPases have 2 components, CF(1) - the catalytic core - and CF(0) - the membrane proton channel. CF(1) has five subunits: alpha(3), beta(3), gamma(1), delta(1), epsilon(1). CF(0) has three main subunits: a(1), b(2) and c(9-12). The alpha and beta chains form an alternating ring which encloses part of the gamma chain. CF(1) is attached to CF(0) by a central stalk formed by the gamma and epsilon chains, while a peripheral stalk is formed by the delta and b chains.

Its subcellular location is the cell membrane. The enzyme catalyses ATP + H2O + 4 H(+)(in) = ADP + phosphate + 5 H(+)(out). Produces ATP from ADP in the presence of a proton gradient across the membrane. The catalytic sites are hosted primarily by the beta subunits. The sequence is that of ATP synthase subunit beta from Cutibacterium acnes (strain DSM 16379 / KPA171202) (Propionibacterium acnes).